A 359-amino-acid chain; its full sequence is Insulin gene enhancer protein isl-2a (359 aa).

LIM zinc-binding domains are found at residues 27-80 (CVGC…CKRD) and 30-143 (CGSQ…RADH). The disordered stretch occupies residues 171-190 (EPVPVRQPPHRNHVHKQSEK). The homeobox DNA-binding region spans 191-250 (TTRVRTVLNEKQLHTLRTCYNANPRPDALMKEQLVEMTGLSPRVIRVWFQNKRCKDKKKS). Residues 326–336 (ESGSLGNSSGS) show a composition bias toward low complexity. The disordered stretch occupies residues 326–359 (ESGSLGNSSGSDVTSLSSQLPDTPNSMVPSPVET). The span at 337 to 359 (DVTSLSSQLPDTPNSMVPSPVET) shows a compositional bias: polar residues.

The protein resides in the nucleus. Functionally, binds to one of the cis-acting domain of the insulin gene enhancer. May be involved in subtype specialization of primary motoneurons. This chain is Insulin gene enhancer protein isl-2a (isl2a), found in Danio rerio (Zebrafish).